The sequence spans 868 residues: Cytosolic phospholipase A2 epsilon (868 aa).

Residues 1 to 46 are disordered; the sequence is MSLQASEGCPGLGTNVFVPQSPQTDEEGSRSGRSFSEFEDTQDLDT. A C2 domain is found at 46-170; it reads TPGLPPFCPM…CFRKKTHVKF (125 aa). Ca(2+) contacts are provided by D84, D90, D140, D142, and D148. In terms of domain architecture, PLA2c spans 324–856; that stretch reads PCPETLDVRL…TLLQALRLAV (533 aa). S412 acts as the Nucleophile in catalysis. D700 functions as the Proton acceptor in the catalytic mechanism. At S800 the chain carries Phosphoserine. A required for localization at membrane structures region spans residues 857-868; it reads EKKKRLKGQCPS.

Ca(2+) is required as a cofactor.

The protein resides in the cytoplasm. It localises to the cytosol. Its subcellular location is the early endosome membrane. It is found in the lysosome membrane. The protein localises to the cell membrane. The enzyme catalyses a 1,2-diacyl-sn-glycero-3-phosphoethanolamine + a 1,2-diacyl-sn-glycero-3-phosphocholine = an N-acyl-1,2-diacyl-sn-glycero-3-phosphoethanolamine + a 2-acyl-sn-glycero-3-phosphocholine + H(+). It carries out the reaction 1-hexadecanoyl-2-octadecanoyl-sn-glycero-3-phosphocholine + 1,2-di-(9Z-octadecenoyl)-sn-glycero-3-phosphoethanolamine = 2-octadecanoyl-sn-glycero-3-phosphocholine + N-hexadecanoyl-1,2-di-(9Z-octadecenoyl)-sn-glycero-3-phosphoethanolamine + H(+). It catalyses the reaction 1-octadecanoyl-2-hexadecanoyl-sn-glycero-3-phosphocholine + 1,2-di-(9Z-octadecenoyl)-sn-glycero-3-phosphoethanolamine = N-octadecanoyl-1,2-di-(9Z-octadecenoyl)-sn-glycero-3-phosphoethanolamine + 2-hexadecanoyl-sn-glycero-3-phosphocholine + H(+). The catalysed reaction is 1,2-di-(9Z-octadecenoyl)-sn-glycero-3-phosphoethanolamine + 1,2-dihexadecanoyl-sn-glycero-3-phosphocholine = N-hexadecanoyl-1,2-di-(9Z-octadecenoyl)-sn-glycero-3-phosphoethanolamine + 2-hexadecanoyl-sn-glycero-3-phosphocholine + H(+). The enzyme catalyses 1,2-di-(5Z,8Z,11Z,14Z-eicosatetraenoyl)-sn-glycero-3-phosphocholine + 1,2-di-(9Z-octadecenoyl)-sn-glycero-3-phosphoethanolamine = N-(5Z,8Z,11Z,14Z-eicosatetraenoyl)-1,2-di-(9Z-octadecenoyl)-sn-glycero-3-phosphoethanolamine + 2-(5Z,8Z,11Z,14Z)-eicosatetraenoyl-sn-glycero-3-phosphocholine + H(+). It carries out the reaction 2 1,2-di-(9Z-octadecenoyl)-sn-glycero-3-phosphoethanolamine = N,1,2-tri-(9Z-octadecenoyl)-sn-glycero-3-phosphoethanolamine + 2-(9Z-octadecenoyl)-sn-glycero-3-phosphoethanolamine + H(+). It catalyses the reaction 1-(1Z-octadecenyl)-2-(9Z-octadecenoyl)-sn-glycero-3-phosphoethanolamine + 1,2-dihexadecanoyl-sn-glycero-3-phosphocholine = 1-O-(1Z-octadecenoyl)-2-(9Z-octadecenoyl)-sn-glycero-3-phospho-N-hexadecanoyl-ethanolamine + 2-hexadecanoyl-sn-glycero-3-phosphocholine + H(+). The catalysed reaction is a 1,2-diacyl-sn-glycero-3-phosphocholine + H2O = a 1-acyl-sn-glycero-3-phosphocholine + a fatty acid + H(+). The enzyme catalyses 1-hexadecanoyl-2-(5Z,8Z,11Z,14Z-eicosatetraenoyl)-sn-glycero-3-phosphocholine + H2O = 1-hexadecanoyl-sn-glycero-3-phosphocholine + (5Z,8Z,11Z,14Z)-eicosatetraenoate + H(+). It carries out the reaction 1-hexadecanoyl-sn-glycero-3-phosphocholine + H2O = sn-glycerol 3-phosphocholine + hexadecanoate + H(+). Its activity is regulated as follows. Stimulated by cytosolic Ca(2+). Stimulated by anionic phospholipids such as phosphatidylserines, phosphatidates and phosphatidylinositols. Its function is as follows. Calcium-dependent N-acyltransferase involved in the biosynthesis of N-acyl ethanolamines (NAEs) in the brain. Transfers the sn-1 fatty acyl chain of phosphatidylcholine (fatty acyl donor) to the amine group of phosphatidylethanolamine (fatty acyl acceptor) to generate N-acyl phosphatidylethanolamine (NAPE). Similarly can use plasmenylethanolamine as a fatty acyl acceptor to form N-acyl plasmenylethanolamine (N-Acyl-PlsEt). Both NAPE and N-Acyl-PlsEt can serve as precursors of bioactive NAEs like N-arachidonoyl phosphatidylethanolamine also called anandamide. Has weak phospholipase A2 and lysophospholipase activities. Regulates intracellular membrane trafficking that requires modulation of membrane curvature as it occurs by enrichment in lysophospholipids. Promotes tubule formation involved in clathrin-independent endocytotic trafficking and cargo recycling. This Homo sapiens (Human) protein is Cytosolic phospholipase A2 epsilon.